Consider the following 546-residue polypeptide: Putative inactive G-type lectin S-receptor-like serine/threonine-protein kinase SRK (546 aa).

An N-terminal signal peptide occupies residues 1–31 (MRGELPNKHHSYTFFVFLFFFLILFPDLSIS). The Extracellular portion of the chain corresponds to 32–441 (VNTLSATESL…FGERRTIRGK (410 aa)). The 121-residue stretch at 34–154 (TLSATESLTI…KINESDEFLW (121 aa)) folds into the Bulb-type lectin domain. Residues asparagine 46, asparagine 120, asparagine 147, and asparagine 243 are each glycosylated (N-linked (GlcNAc...) asparagine). The EGF-like; atypical domain maps to 293–329 (PKDTCDLYGICGPYAYCDMSTSPTCNCIKGFQPLSPQ). Cystine bridges form between cysteine 297/cysteine 309, cysteine 303/cysteine 317, cysteine 378/cysteine 403, and cysteine 382/cysteine 388. Residues 348 to 428 (CGEDRFFRLM…DGQDLFVRLA (81 aa)) enclose the PAN domain. Asparagine 387 carries N-linked (GlcNAc...) asparagine glycosylation. A helical membrane pass occupies residues 442–462 (IIGLIIGISLMLVLSFIIYCF). Residues 463-546 (WKKKQKRARA…IVYKGRLLDG (84 aa)) are Cytoplasmic-facing. A Protein kinase domain is found at 524–546 (FSDSNILGRGGFGIVYKGRLLDG). 530 to 538 (LGRGGFGIV) contacts ATP.

Belongs to the protein kinase superfamily. Ser/Thr protein kinase family.

Its subcellular location is the cell membrane. Truncated and inactivated form of SRK, the female specificity determinant of self-incompatibility when active. Most A.thaliana cultivars contain such an inactive form and thus, are self-fertiles. The polypeptide is Putative inactive G-type lectin S-receptor-like serine/threonine-protein kinase SRK (PSEUDOSRKA) (Arabidopsis thaliana (Mouse-ear cress)).